Consider the following 359-residue polypeptide: Type-1 angiotensin II receptor (359 aa).

The Extracellular segment spans residues 1–25 (MVPNYSTEETVKRIHVDCPVSGRHS). N-linked (GlcNAc...) asparagine glycosylation occurs at Asn-4. Asp-17 is an angiotensin II binding site. Intrachain disulfides connect Cys-18–Cys-274 and Cys-101–Cys-180. Residues 26 to 55 (YIYIMVPTVYSIIFIIGIFGNSLVVIVIYC) traverse the membrane as a helical segment. Topologically, residues 56–61 (YMKLKT) are cytoplasmic. A helical membrane pass occupies residues 62–89 (VASIFLLNLALADLCFLITLPLWAAYTA). Residues 90–98 (MEYQWPFGN) are Extracellular-facing. A helical membrane pass occupies residues 99–125 (CLCKLASAGISFNLYASVFLLTCLSID). Residues 126-141 (RYLAIVHPVKSRIRRT) lie on the Cytoplasmic side of the membrane. A helical transmembrane segment spans residues 142 to 165 (MFVARVTCIVIWLLAGVASLPVII). Residues 166-190 (HRNIFFAENLNMTVCGFRYDNNNTT) lie on the Extracellular side of the membrane. Residue Arg-167 coordinates angiotensin II. A glycan (N-linked (GlcNAc...) asparagine) is linked at Asn-176. Positions 182 and 184 each coordinate angiotensin II. Residues Asn-187 and Asn-188 are each glycosylated (N-linked (GlcNAc...) asparagine). The helical transmembrane segment at 191–216 (LRVGLGLSKNLLGFLIPFLIILTSYT) threads the bilayer. Lys-199 serves as a coordination point for angiotensin II. Residues 217-239 (LIWKTLKKAYQIQRNKTRNDDIF) lie on the Cytoplasmic side of the membrane. Residues 240-268 (KMIVAIVFFFFFSWIPHQVFTFLDVLIQL) form a helical membrane-spanning segment. The Extracellular portion of the chain corresponds to 269–278 (HVITDCKITD). The chain crosses the membrane as a helical span at residues 279-304 (IVDTAMPFTICIAYFNNCLNPFFYVF). Over 305–359 (FGKNFKKYFLQLIKYIPPNVSTHPSLTTKMSSLSYRPPENIRLPTKKTAGSFDTE) the chain is Cytoplasmic.

This sequence belongs to the G-protein coupled receptor 1 family. C-terminal Ser or Thr residues may be phosphorylated. As to expression, adrenal medulla.

The protein resides in the cell membrane. Its function is as follows. Receptor for angiotensin II, a vasoconstricting peptide, which acts as a key regulator of blood pressure and sodium retention by the kidney. The activated receptor in turn couples to G-alpha proteins G(q) (GNAQ, GNA11, GNA14 or GNA15) and thus activates phospholipase C and increases the cytosolic Ca(2+) concentrations, which in turn triggers cellular responses such as stimulation of protein kinase C. This is Type-1 angiotensin II receptor (AGTR1) from Meleagris gallopavo (Wild turkey).